A 1538-amino-acid chain; its full sequence is Dicer-like protein 1 (1538 aa).

Residues 39–72 (DPAESSADVHKDEHSSDNSDNDNEAVPKPNDFSQ) form a disordered region. The segment covering 45 to 55 (ADVHKDEHSSD) has biased composition (basic and acidic residues). Positions 134-315 (LFERAKTQNT…EAATRLETLL (182 aa)) constitute a Helicase ATP-binding domain. 147-154 (LDTGSGKT) lines the ATP pocket. The DEAH box signature appears at 260 to 263 (DEAH). The Helicase C-terminal domain occupies 460-619 (ELSKHFSDTT…ETLPEDRILH (160 aa)). A Dicer dsRNA-binding fold domain is found at 652–742 (AIAILARYAS…NSIYHRRLPA (91 aa)). Residues 892-1020 (DTVSFVHNND…ICAEPLRISA (129 aa)) enclose the PAZ domain. RNase III domains follow at residues 1044-1203 (IALE…LSGG) and 1254-1406 (ARHV…VDSK). Mg(2+)-binding residues include glutamate 1295, aspartate 1392, and glutamate 1395. Residues 1440–1508 (TFLHNKLTNE…SEKALAVLDG (69 aa)) enclose the DRBM domain. Positions 1452, 1479, 1520, and 1522 each coordinate Zn(2+).

The protein belongs to the helicase family. Dicer subfamily. The cofactor is Mg(2+). Requires Mn(2+) as cofactor.

Dicer-like endonuclease involved in cleaving double-stranded RNA in the RNA interference (RNAi) pathway. Produces 21 to 25 bp dsRNAs (siRNAs) which target the selective destruction of homologous RNAs leading to sequence-specific suppression of gene expression, called post-transcriptional gene silencing (PTGS). Part of a broad host defense response against viral infection and transposons. The sequence is that of Dicer-like protein 1 (dcl1) from Neosartorya fischeri (strain ATCC 1020 / DSM 3700 / CBS 544.65 / FGSC A1164 / JCM 1740 / NRRL 181 / WB 181) (Aspergillus fischerianus).